The chain runs to 397 residues: ATP-dependent RNA helicase eIF4A (397 aa).

The Q motif signature appears at 24-52; the sequence is DSFDEMNLKPELLRGIYAYGFERPSAIQQ. The Helicase ATP-binding domain occupies 55 to 225; the sequence is IMPVIKGHDV…TKFMREPVRI (171 aa). Residue 68–75 participates in ATP binding; that stretch reads AQSGTGKT. Residues 173 to 176 carry the DEAD box motif; that stretch reads DEAD. In terms of domain architecture, Helicase C-terminal spans 236–397; sequence GIKQFYIAVE…EMPMNVADLI (162 aa).

Belongs to the DEAD box helicase family. eIF4A subfamily. In terms of assembly, component of the eIF4F complex, which composition varies with external and internal environmental conditions. It is composed of at least eIF4A, eIF4E and eIF4G.

The protein localises to the cytoplasm. The enzyme catalyses ATP + H2O = ADP + phosphate + H(+). In terms of biological role, ATP-dependent RNA helicase which is a subunit of the eIF4F complex involved in cap recognition and is required for mRNA binding to ribosome. In the current model of translation initiation, eIF4A unwinds RNA secondary structures in the 5'-UTR of mRNAs which is necessary to allow efficient binding of the small ribosomal subunit, and subsequent scanning for the initiator codon. The protein is ATP-dependent RNA helicase eIF4A (tif-1) of Neurospora crassa (strain ATCC 24698 / 74-OR23-1A / CBS 708.71 / DSM 1257 / FGSC 987).